Here is an 890-residue protein sequence, read N- to C-terminus: Leucine--tRNA ligase (890 aa).

Positions 48–58 (PYPSGKLHMGH) match the 'HIGH' region motif. Residues 645–649 (KMSKS) carry the 'KMSKS' region motif. Lys-648 serves as a coordination point for ATP.

The protein belongs to the class-I aminoacyl-tRNA synthetase family.

It is found in the cytoplasm. It catalyses the reaction tRNA(Leu) + L-leucine + ATP = L-leucyl-tRNA(Leu) + AMP + diphosphate. This chain is Leucine--tRNA ligase, found in Polynucleobacter necessarius subsp. necessarius (strain STIR1).